The primary structure comprises 369 residues: Caffeine synthase 1 (369 aa).

Y24 serves as a coordination point for S-adenosyl-L-homocysteine. T31 is a caffeine binding site. C66, N71, D103, L104, S138, and F139 together coordinate S-adenosyl-L-homocysteine. Y156, H159, and W160 together coordinate caffeine. N177 contributes to the Mg(2+) binding site. Residue R225 coordinates caffeine. The Mg(2+) site is built by D263, F265, and N266. A caffeine-binding site is contributed by F321.

This sequence belongs to the methyltransferase superfamily. Type-7 methyltransferase family. The cofactor is Mg(2+).

The enzyme catalyses theobromine + S-adenosyl-L-methionine = caffeine + S-adenosyl-L-homocysteine + H(+). It catalyses the reaction 7-methylxanthine + S-adenosyl-L-methionine = theobromine + S-adenosyl-L-homocysteine + H(+). Its pathway is alkaloid biosynthesis. In terms of biological role, involved in the biosynthesis of caffeine. Catalyzes the conversion of 7-methylxanthine (7mX) to theobromine and of theobromine to caffeine. The protein is Caffeine synthase 1 of Camellia taliensis (Wild tea).